Consider the following 161-residue polypeptide: Heme transporter hrg-6 (161 aa).

Transmembrane regions (helical) follow at residues 13 to 33 (IAYT…YIFA), 38 to 58 (VALA…YFYL), 75 to 95 (VLFW…ITAI), and 115 to 135 (WWST…NAFI).

It belongs to the HRG family.

The protein localises to the membrane. In terms of biological role, heme transporter. The protein is Heme transporter hrg-6 (hrg-6) of Caenorhabditis elegans.